The chain runs to 175 residues: Adenine phosphoribosyltransferase (175 aa).

Belongs to the purine/pyrimidine phosphoribosyltransferase family. Homodimer.

It localises to the cytoplasm. It catalyses the reaction AMP + diphosphate = 5-phospho-alpha-D-ribose 1-diphosphate + adenine. It functions in the pathway purine metabolism; AMP biosynthesis via salvage pathway; AMP from adenine: step 1/1. Catalyzes a salvage reaction resulting in the formation of AMP, that is energically less costly than de novo synthesis. The protein is Adenine phosphoribosyltransferase of Caldicellulosiruptor bescii (strain ATCC BAA-1888 / DSM 6725 / KCTC 15123 / Z-1320) (Anaerocellum thermophilum).